We begin with the raw amino-acid sequence, 350 residues long: Biotin synthase (350 aa).

The span at 1 to 13 (MVTQAATRPSNDA) shows a compositional bias: polar residues. Residues 1 to 20 (MVTQAATRPSNDAGQDGVTE) form a disordered region. A Radical SAM core domain is found at 71-296 (PEVEVEGIIS…RTMLRFAGGR (226 aa)). Residues Cys86, Cys90, and Cys93 each coordinate [4Fe-4S] cluster. [2Fe-2S] cluster is bound by residues Cys129, Cys162, Cys221, and Arg291.

This sequence belongs to the radical SAM superfamily. Biotin synthase family. As to quaternary structure, homodimer. Requires [4Fe-4S] cluster as cofactor. It depends on [2Fe-2S] cluster as a cofactor.

The enzyme catalyses (4R,5S)-dethiobiotin + (sulfur carrier)-SH + 2 reduced [2Fe-2S]-[ferredoxin] + 2 S-adenosyl-L-methionine = (sulfur carrier)-H + biotin + 2 5'-deoxyadenosine + 2 L-methionine + 2 oxidized [2Fe-2S]-[ferredoxin]. The protein operates within cofactor biosynthesis; biotin biosynthesis; biotin from 7,8-diaminononanoate: step 2/2. Its function is as follows. Catalyzes the conversion of dethiobiotin (DTB) to biotin by the insertion of a sulfur atom into dethiobiotin via a radical-based mechanism. This is Biotin synthase from Mycobacterium ulcerans (strain Agy99).